A 254-amino-acid chain; its full sequence is Type III pantothenate kinase (254 aa).

7 to 14 (DVGNTRLK) provides a ligand contact to ATP. Substrate contacts are provided by residues tyrosine 96 and 103–106 (GSDR). Aspartate 105 functions as the Proton acceptor in the catalytic mechanism. Residue threonine 133 participates in ATP binding. Threonine 183 contacts substrate.

It belongs to the type III pantothenate kinase family. In terms of assembly, homodimer. It depends on NH4(+) as a cofactor. Requires K(+) as cofactor.

It is found in the cytoplasm. It catalyses the reaction (R)-pantothenate + ATP = (R)-4'-phosphopantothenate + ADP + H(+). It participates in cofactor biosynthesis; coenzyme A biosynthesis; CoA from (R)-pantothenate: step 1/5. Its function is as follows. Catalyzes the phosphorylation of pantothenate (Pan), the first step in CoA biosynthesis. The polypeptide is Type III pantothenate kinase (Paracidovorax citrulli (strain AAC00-1) (Acidovorax citrulli)).